A 261-amino-acid chain; its full sequence is MSDPAVPRRPTLDLRSFTPARVALGRSGASVPTRALLDFTLDHARARDAVHAVFDVPRLLADLGALGLAVTEARSRAADRRDYLRRPDLGRQLDAGSIEALARIASRPCQLAIVIGDGLSAAAVHAHAVALVTRLLPLLAADDAVALGHVVVASGARVALGDQIGAILGARMVVTLIGERPGLSAPDSLGAYLTFAPTPGRTDAERNCVSNIHHAGLSNDEAAFKIAWLLREGLAREVTGVALKDESADRAPRRIGTSLPE.

Adenosylcob(III)alamin contacts are provided by Val158, Glu179, and Cys208.

The protein belongs to the EutC family. In terms of assembly, the basic unit is a heterodimer which dimerizes to form tetramers. The heterotetramers trimerize; 6 large subunits form a core ring with 6 small subunits projecting outwards. Adenosylcob(III)alamin is required as a cofactor.

Its subcellular location is the bacterial microcompartment. It catalyses the reaction ethanolamine = acetaldehyde + NH4(+). It functions in the pathway amine and polyamine degradation; ethanolamine degradation. Catalyzes the deamination of various vicinal amino-alcohols to oxo compounds. Allows this organism to utilize ethanolamine as the sole source of nitrogen and carbon in the presence of external vitamin B12. The chain is Ethanolamine ammonia-lyase small subunit from Bradyrhizobium diazoefficiens (strain JCM 10833 / BCRC 13528 / IAM 13628 / NBRC 14792 / USDA 110).